Reading from the N-terminus, the 651-residue chain is ATP synthase F(1) complex catalytic subunit beta, mitochondrial (651 aa).

The transit peptide at 1–30 directs the protein to the mitochondrion; it reads MFVARRLSKNITQISKTAVKTSVRAVPVRG. ADP is bound by residues Gly-259, Val-260, Gly-261, Lys-262, Thr-263, and Val-264. Gly-259 is a binding site for ATP. Positions 259, 260, 261, 262, and 263 each coordinate phosphate. ATP contacts are provided by Gly-261, Lys-262, Thr-263, and Val-264. Residue Thr-263 participates in Mg(2+) binding. Glu-288 contacts Mg(2+). Arg-289 serves as a coordination point for ATP.

This sequence belongs to the ATPase alpha/beta chains family. As to quaternary structure, homotrimer. Component of the ATP synthase complex composed at least of ATP5F1A/subunit alpha, ATP5F1B/subunit beta, ATP5MC1/subunit c (homooctomer), MT-ATP6/subunit a, MT-ATP8/subunit 8, ATP5ME/subunit e, ATP5MF/subunit f, ATP5MG/subunit g, ATP5MK/subunit k, ATP5MJ/subunit j, ATP5F1C/subunit gamma, ATP5F1D/subunit delta, ATP5F1E/subunit epsilon, ATP5PF/subunit F6, ATP5PB/subunit b, ATP5PD/subunit d, ATP5PO/subunit OSCP. ATP synthase complex consists of a soluble F(1) head domain (subunits alpha(3) and beta(3)) - the catalytic core - and a membrane F(0) domain - the membrane proton channel (subunits c, a, 8, e, f, g, k and j). These two domains are linked by a central stalk (subunits gamma, delta, and epsilon) rotating inside the F1 region and a stationary peripheral stalk (subunits F6, b, d, and OSCP).

It is found in the mitochondrion inner membrane. The catalysed reaction is ATP + H2O + 4 H(+)(in) = ADP + phosphate + 5 H(+)(out). Its function is as follows. Catalytic subunit beta, of the mitochondrial membrane ATP synthase complex (F(1)F(0) ATP synthase or Complex V) that produces ATP from ADP in the presence of a proton gradient across the membrane which is generated by electron transport complexes of the respiratory chain. ATP synthase complex consist of a soluble F(1) head domain - the catalytic core - and a membrane F(1) domain - the membrane proton channel. These two domains are linked by a central stalk rotating inside the F(1) region and a stationary peripheral stalk. During catalysis, ATP synthesis in the catalytic domain of F(1) is coupled via a rotary mechanism of the central stalk subunits to proton translocation. In vivo, can only synthesize ATP although its ATP hydrolase activity can be activated artificially in vitro. With the subunit alpha (ATP5F1A), forms the catalytic core in the F(1) domain. In Dictyostelium discoideum (Social amoeba), this protein is ATP synthase F(1) complex catalytic subunit beta, mitochondrial.